Consider the following 297-residue polypeptide: Homoserine kinase (297 aa).

84–94 (PPARGLGSSAT) provides a ligand contact to ATP.

The protein belongs to the GHMP kinase family. Homoserine kinase subfamily.

It is found in the cytoplasm. The catalysed reaction is L-homoserine + ATP = O-phospho-L-homoserine + ADP + H(+). Its pathway is amino-acid biosynthesis; L-threonine biosynthesis; L-threonine from L-aspartate: step 4/5. Catalyzes the ATP-dependent phosphorylation of L-homoserine to L-homoserine phosphate. This Aquifex aeolicus (strain VF5) protein is Homoserine kinase (thrB).